We begin with the raw amino-acid sequence, 265 residues long: U6 snRNA phosphodiesterase 1 (265 aa).

Residues 1–72 (MSAAPLVGYS…DSTKHGGRVR (72 aa)) form a disordered region. Residues 20–31 (DGMRTRPGDGSH) show a composition bias toward basic and acidic residues. His120 serves as the catalytic Proton acceptor. Residue 120-122 (HLS) coordinates AMP. Residues Gln164, Tyr202, and 206-210 (SFHLS) each bind UMP. AMP is bound by residues Tyr202 and 204 to 210 (DPSFHLS). His208 functions as the Proton donor in the catalytic mechanism.

It belongs to the 2H phosphoesterase superfamily. USB1 family. As to quaternary structure, interacts with PLRG1, CDC5L and PRPF19.

Its subcellular location is the nucleus. It carries out the reaction a 3'-end uridylyl-uridine-RNA = a 3'-end 2',3'-cyclophospho-uridine-RNA + uridine. It catalyses the reaction a 3'-end uridylyl-adenosine-RNA = a 3'-end 2',3'-cyclophospho-uridine-RNA + adenosine. Its activity is regulated as follows. 3'-5' RNA exonuclease activity is inhibited by a 3' phosphate terminated RNA. Functionally, 3'-5' RNA exonuclease that trims the 3' end of oligo(U) and oligo(A) tracts of the pre-U6 small nuclear RNA (snRNA) molecule, leading to the formation of a mature U6 snRNA 3' end-terminated with a 2',3'-cyclic phosphate. Participates in the U6 snRNA 3' end processing that prevents U6 snRNA degradation. In addition also removes uridines from the 3' end of U6atac snRNA and possibly the vault RNA VTRNA1-1. In Homo sapiens (Human), this protein is U6 snRNA phosphodiesterase 1.